The chain runs to 638 residues: tRNA uridine 5-carboxymethylaminomethyl modification enzyme MnmG (638 aa).

FAD is bound by residues 13–18 (GGGHAG), V125, and S180. 273–287 (GPRYCPSIEDKIHRF) contributes to the NAD(+) binding site. Q370 is a binding site for FAD.

The protein belongs to the MnmG family. Homodimer. Heterotetramer of two MnmE and two MnmG subunits. The cofactor is FAD.

The protein localises to the cytoplasm. Functionally, NAD-binding protein involved in the addition of a carboxymethylaminomethyl (cmnm) group at the wobble position (U34) of certain tRNAs, forming tRNA-cmnm(5)s(2)U34. The sequence is that of tRNA uridine 5-carboxymethylaminomethyl modification enzyme MnmG from Cellvibrio japonicus (strain Ueda107) (Pseudomonas fluorescens subsp. cellulosa).